The sequence spans 147 residues: 3-hydroxyacyl-[acyl-carrier-protein] dehydratase FabZ (147 aa).

The active site involves histidine 48.

Belongs to the thioester dehydratase family. FabZ subfamily.

Its subcellular location is the cytoplasm. It catalyses the reaction a (3R)-hydroxyacyl-[ACP] = a (2E)-enoyl-[ACP] + H2O. In terms of biological role, involved in unsaturated fatty acids biosynthesis. Catalyzes the dehydration of short chain beta-hydroxyacyl-ACPs and long chain saturated and unsaturated beta-hydroxyacyl-ACPs. This chain is 3-hydroxyacyl-[acyl-carrier-protein] dehydratase FabZ, found in Aliarcobacter butzleri (strain RM4018) (Arcobacter butzleri).